Consider the following 203-residue polypeptide: Calcineurin B-like protein 5 (203 aa).

Residue Gly2 is the site of N-myristoyl glycine attachment. EF-hand domains lie at 30-65 (EVEVLHGLFIKLTSCLSNDNLLTKEKFQFILIKNTK), 66-101 (KRSLSAERIFGLFDMRNDGAIDFGEFVHTLNIFHPN), 103-138 (SPRDKAIFAFRLYDTRETGFIEPEEVKEMIIDVLEE), and 147-182 (IIDSIVSKTFEEADWKKDGIIDLEEWENFVATYPLT).

This sequence belongs to the calcineurin regulatory subunit family. In terms of assembly, homodimer. Interacts with PP2CA, CIPK2, CIPK11, CIPK23 and CIPK24. Both N-myristoylation and calcium-mediated conformational changes are essential for its function. As to expression, expressed in green tissues, but not in the roots.

It is found in the cytoplasm. Its subcellular location is the nucleus. Its function is as follows. Acts as a calcium sensor. CBL proteins interact with CIPK serine-threonine protein kinases. Binding of a CBL protein to the regulatory NAF domain of a CIPK protein lead to the activation of the kinase in a calcium-dependent manner. May function as a positive regulator of salt or drought responses. The sequence is that of Calcineurin B-like protein 5 (CBL5) from Arabidopsis thaliana (Mouse-ear cress).